Here is an 81-residue protein sequence, read N- to C-terminus: Photosystem I iron-sulfur center (81 aa).

4Fe-4S ferredoxin-type domains are found at residues 2-31 (AHSV…MVPW) and 39-68 (IASA…VRVY). Residues Cys11, Cys14, Cys17, Cys21, Cys48, Cys51, Cys54, and Cys58 each contribute to the [4Fe-4S] cluster site.

The eukaryotic PSI reaction center is composed of at least 11 subunits. The cofactor is [4Fe-4S] cluster.

The protein resides in the plastid. It is found in the chloroplast thylakoid membrane. It carries out the reaction reduced [plastocyanin] + hnu + oxidized [2Fe-2S]-[ferredoxin] = oxidized [plastocyanin] + reduced [2Fe-2S]-[ferredoxin]. Its function is as follows. Apoprotein for the two 4Fe-4S centers FA and FB of photosystem I (PSI); essential for photochemical activity. FB is the terminal electron acceptor of PSI, donating electrons to ferredoxin. The C-terminus interacts with PsaA/B/D and helps assemble the protein into the PSI complex. Required for binding of PsaD and PsaE to PSI. PSI is a plastocyanin-ferredoxin oxidoreductase, converting photonic excitation into a charge separation, which transfers an electron from the donor P700 chlorophyll pair to the spectroscopically characterized acceptors A0, A1, FX, FA and FB in turn. This is Photosystem I iron-sulfur center from Gnetum gnemon (Spanish joint-fir).